The sequence spans 209 residues: Heat shock protein beta-1 (209 aa).

Omega-N-methylarginine is present on Arg-12. Position 13 is a phosphoserine (Ser-13). Ser-15 bears the Phosphoserine; by MAPKAPK2 and MAPKAPK3 mark. Residue Ser-27 is modified to Phosphoserine. Residues Ala-74–Lys-209 are interaction with TGFB1I1. The region spanning Ala-80 to Thr-188 is the sHSP domain. 2 positions are modified to phosphoserine; by MAPKAPK2, MAPKAPK3 and MAPKAPK5: Ser-82 and Ser-86. 3 positions are modified to phosphoserine: Ser-87, Ser-90, and Ser-102. Lys-127 bears the N6-acetyllysine mark. Thr-178 carries the phosphothreonine modification. Phosphoserine occurs at positions 180 and 203.

Belongs to the small heat shock protein (HSP20) family. As to quaternary structure, homooligomer. Homodimer; becomes monomeric upon activation. Heterooligomer; with HSPB6. Associates with alpha- and beta-tubulin. Interacts with TGFB1I1. Interacts with CRYAB. Interacts with HSPB8. Interacts with HSPBAP1. Phosphorylated upon exposure to protein kinase C activators and heat shock. Phosphorylation by MAPKAPK2 and MAPKAPK3 in response to stress dissociates HSPB1 from large small heat-shock protein (sHsps) oligomers and impairs its chaperone activity and ability to protect against oxidative stress effectively. Phosphorylation by MAPKAPK5 in response to PKA stimulation induces F-actin rearrangement.

Its subcellular location is the cytoplasm. The protein resides in the nucleus. The protein localises to the cytoskeleton. It localises to the spindle. Functionally, small heat shock protein which functions as a molecular chaperone probably maintaining denatured proteins in a folding-competent state. Plays a role in stress resistance and actin organization. Through its molecular chaperone activity may regulate numerous biological processes including the phosphorylation and the axonal transport of neurofilament proteins. This is Heat shock protein beta-1 (HSPB1) from Canis lupus familiaris (Dog).